The following is a 327-amino-acid chain: Fructose-1,6-bisphosphatase class 1 (327 aa).

Mg(2+) contacts are provided by Glu84, Asp103, Leu105, and Asp106. Residues Asp106–Ser109, Asn197, and Lys263 each bind substrate. Residue Glu269 coordinates Mg(2+).

It belongs to the FBPase class 1 family. Homotetramer. The cofactor is Mg(2+).

Its subcellular location is the cytoplasm. The enzyme catalyses beta-D-fructose 1,6-bisphosphate + H2O = beta-D-fructose 6-phosphate + phosphate. Its pathway is carbohydrate biosynthesis; gluconeogenesis. The chain is Fructose-1,6-bisphosphatase class 1 from Idiomarina loihiensis (strain ATCC BAA-735 / DSM 15497 / L2-TR).